Here is a 391-residue protein sequence, read N- to C-terminus: MSIVRMTDLDLSGKRVLIRQDLNVPIENGRITSEQRITASLPTLKRALEQGAAVMVTSHLGRPKEGVWSEADSLAPVAQRLSELLGREVPLVRDWVDGVEVQPGQLVLLENCRMNVGEGKDDEALSKKYAALCDVFVMDAFGTAHRAQASTHGVIRFAPVAAGGPLLMAELDALAQALDAPAKPLLAIVAGSKVSTKLELLANLVGKVDQLIVGGGIANTFIAAAGYNVGKSLYEPDLLDTAKKIVADAKARGADIPLPVDVVTAKQFMPDAVAEVKAVDAVAEDDLILDIGPQTAAQYAQLIDKAGTVVWNGPVGVFEFEAFSKGTEALARAIASSRAFSIAGGGDTLAAVDKFDIAQQVSYISTGGGAFLEFLEGKTLPAVAALDARGA.

Residues D21–N23, R36, H59–R62, R113, and R146 each bind substrate. ATP contacts are provided by residues K197, E319, and G345–T348.

It belongs to the phosphoglycerate kinase family. In terms of assembly, monomer.

Its subcellular location is the cytoplasm. It carries out the reaction (2R)-3-phosphoglycerate + ATP = (2R)-3-phospho-glyceroyl phosphate + ADP. The protein operates within carbohydrate degradation; glycolysis; pyruvate from D-glyceraldehyde 3-phosphate: step 2/5. The sequence is that of Phosphoglycerate kinase from Stenotrophomonas maltophilia (strain K279a).